The sequence spans 251 residues: 5'-nucleotidase SurE (251 aa).

A divalent metal cation is bound by residues aspartate 8, aspartate 9, serine 39, and asparagine 95.

It belongs to the SurE nucleotidase family. It depends on a divalent metal cation as a cofactor.

The protein localises to the cytoplasm. The catalysed reaction is a ribonucleoside 5'-phosphate + H2O = a ribonucleoside + phosphate. Nucleotidase that shows phosphatase activity on nucleoside 5'-monophosphates. This Ralstonia pickettii (strain 12J) protein is 5'-nucleotidase SurE.